The chain runs to 347 residues: Druantia protein DruD (347 aa).

It localises to the cytoplasm. Its function is as follows. Component of antiviral defense system Druantia type I, composed of DruA, DruB, DruC, DruD and DruE. Expression of Druantia in E.coli (strain MG1655) confers resistance to phage lambda, SECphi18, SECphi27 and T4. The sequence is that of Druantia protein DruD from Escherichia coli (strain UMEA 4076-1).